A 72-amino-acid chain; its full sequence is UPF0154 protein RBAM_017710 (72 aa).

A helical membrane pass occupies residues 4 to 24; that stretch reads WVGILVGVVALLIGVALGFFI.

Belongs to the UPF0154 family.

The protein localises to the cell membrane. The chain is UPF0154 protein RBAM_017710 from Bacillus velezensis (strain DSM 23117 / BGSC 10A6 / LMG 26770 / FZB42) (Bacillus amyloliquefaciens subsp. plantarum).